A 200-amino-acid chain; its full sequence is Dephospho-CoA kinase (200 aa).

The 198-residue stretch at 3–200 (KVGLTGGIGS…EELQRRLHSR (198 aa)) folds into the DPCK domain. Position 11–16 (11–16 (GSGKSS)) interacts with ATP.

It belongs to the CoaE family.

The protein resides in the cytoplasm. The enzyme catalyses 3'-dephospho-CoA + ATP = ADP + CoA + H(+). It functions in the pathway cofactor biosynthesis; coenzyme A biosynthesis; CoA from (R)-pantothenate: step 5/5. Functionally, catalyzes the phosphorylation of the 3'-hydroxyl group of dephosphocoenzyme A to form coenzyme A. The chain is Dephospho-CoA kinase from Thermobifida fusca (strain YX).